Here is a 332-residue protein sequence, read N- to C-terminus: Beta-chimaerin (332 aa).

A Phorbol-ester/DAG-type zinc finger spans residues 78 to 128 (THNFKVHTFRGPHWCEYCANFMWGLIAQGVRCSDCGLNVHKQCSKHVPNDC). Residues 141-332 (CDLTTLVKAH…ILIENEDVLF (192 aa)) form the Rho-GAP domain.

It localises to the membrane. Its activity is regulated as follows. In the inactive state, the N terminus protrudes into the active site of the Rho-GAP domain, sterically blocking Rac binding. Phospholipid binding to the Phorbol-ester/DAG-type zinc-finger/C1 domain triggers the cooperative dissociation of these interactions, allowing the N-terminus to move out of the active site and thereby activating the enzyme. Functionally, GTPase-activating protein for p21-rac. This is Beta-chimaerin (Chn2) from Mus musculus (Mouse).